The primary structure comprises 182 residues: Ribosome maturation factor RimM (182 aa).

Residues 103 to 182 (EDDYYWKDLM…RVEVDWDPGF (80 aa)) enclose the PRC barrel domain.

It belongs to the RimM family. Binds ribosomal protein uS19.

Its subcellular location is the cytoplasm. Functionally, an accessory protein needed during the final step in the assembly of 30S ribosomal subunit, possibly for assembly of the head region. Essential for efficient processing of 16S rRNA. May be needed both before and after RbfA during the maturation of 16S rRNA. It has affinity for free ribosomal 30S subunits but not for 70S ribosomes. The chain is Ribosome maturation factor RimM from Yersinia pestis bv. Antiqua (strain Antiqua).